We begin with the raw amino-acid sequence, 105 residues long: Replication restart protein PriB (105 aa).

In terms of domain architecture, SSB spans 1–102; that stretch reads MTANRLVLTG…LHAEQIELID (102 aa).

The protein belongs to the PriB family. Homodimer. Interacts with PriA and DnaT. Component of the replication restart primosome. Primosome assembly occurs via a 'hand-off' mechanism. PriA binds to replication forks, subsequently PriB then DnaT bind; DnaT then displaces ssDNA to generate the helicase loading substrate.

Involved in the restart of stalled replication forks, which reloads the replicative helicase on sites other than the origin of replication; the PriA-PriB pathway is the major replication restart pathway. During primosome assembly it facilitates complex formation between PriA and DnaT on DNA; stabilizes PriA on DNA. Stimulates the DNA unwinding activity of PriA helicase. The polypeptide is Replication restart protein PriB (Proteus mirabilis (strain HI4320)).